The primary structure comprises 210 residues: Dephospho-CoA kinase (210 aa).

The 199-residue stretch at 4 to 202 (WVGLTGGIGS…AFYSGIFASK (199 aa)) folds into the DPCK domain. 12–17 (GSGKSA) serves as a coordination point for ATP.

Belongs to the CoaE family.

Its subcellular location is the cytoplasm. The enzyme catalyses 3'-dephospho-CoA + ATP = ADP + CoA + H(+). It functions in the pathway cofactor biosynthesis; coenzyme A biosynthesis; CoA from (R)-pantothenate: step 5/5. Catalyzes the phosphorylation of the 3'-hydroxyl group of dephosphocoenzyme A to form coenzyme A. In Neisseria meningitidis serogroup B (strain ATCC BAA-335 / MC58), this protein is Dephospho-CoA kinase.